The chain runs to 300 residues: Cation-efflux pump FieF (300 aa).

Residues 24–44 (LLIKIFAWWYTGSVSILAALV) form a helical membrane-spanning segment. Asp45 and Asp49 together coordinate Zn(2+). Helical transmembrane passes span 82-102 (AALA…LTSI) and 114-134 (PGVG…LVTF). The Zn(2+) site is built by His153 and Asp157. Helical transmembrane passes span 156 to 176 (SDVM…YGWH) and 178 to 198 (ADAL…LRMG).

It belongs to the cation diffusion facilitator (CDF) transporter (TC 2.A.4) family. FieF subfamily. Homodimer.

Its subcellular location is the cell inner membrane. It carries out the reaction Zn(2+)(in) + H(+)(out) = Zn(2+)(out) + H(+)(in). It catalyses the reaction Cd(2+)(in) + H(+)(out) = Cd(2+)(out) + H(+)(in). The enzyme catalyses Fe(2+)(in) + H(+)(out) = Fe(2+)(out) + H(+)(in). Divalent metal cation transporter which exports Zn(2+), Cd(2+) and possibly Fe(2+). May be involved in zinc and iron detoxification by efflux. The protein is Cation-efflux pump FieF of Salmonella enteritidis PT4 (strain P125109).